The primary structure comprises 42 residues: Large ribosomal subunit protein bL36 (42 aa).

The protein belongs to the bacterial ribosomal protein bL36 family.

The protein is Large ribosomal subunit protein bL36 of Wolbachia sp. subsp. Brugia malayi (strain TRS).